Here is an 885-residue protein sequence, read N- to C-terminus: DNA mismatch repair protein MutS (885 aa).

626–633 (GPNMGGKS) serves as a coordination point for ATP.

This sequence belongs to the DNA mismatch repair MutS family.

In terms of biological role, this protein is involved in the repair of mismatches in DNA. It is possible that it carries out the mismatch recognition step. This protein has a weak ATPase activity. The sequence is that of DNA mismatch repair protein MutS from Burkholderia orbicola (strain MC0-3).